The following is a 32-amino-acid chain: Photosystem II reaction center protein Z (32 aa).

A helical transmembrane segment spans residues 9-31 (FILLGAVTWAILVFIVGSLNSYV).

Belongs to the PsbZ family. In terms of assembly, PSII is composed of 1 copy each of membrane proteins PsbA, PsbB, PsbC, PsbD, PsbE, PsbF, PsbH, PsbI, PsbJ, PsbK, PsbL, PsbM, PsbT, PsbY, PsbZ, Psb30/Ycf12, at least 3 peripheral proteins of the oxygen-evolving complex and a large number of cofactors. It forms dimeric complexes.

It localises to the plastid. It is found in the chloroplast thylakoid membrane. Its function is as follows. May control the interaction of photosystem II (PSII) cores with the light-harvesting antenna, regulates electron flow through the 2 photosystem reaction centers. PSII is a light-driven water plastoquinone oxidoreductase, using light energy to abstract electrons from H(2)O, generating a proton gradient subsequently used for ATP formation. The protein is Photosystem II reaction center protein Z of Euglena stellata.